Reading from the N-terminus, the 374-residue chain is Inner membrane transport permease YhhJ (374 aa).

The Cytoplasmic segment spans residues 1-22 (MRHLRNIFNLGIKELRSLLGDK). A helical transmembrane segment spans residues 23 to 43 (AMLTLIVFSFTVSVYSSATVT). At 44–172 (PGSLNLAPIA…TRMRFNPNLD (129 aa)) the chain is on the periplasmic side. One can recognise an ABC transmembrane type-2 domain in the interval 133–369 (NGYIQNIING…TIALLRFRKT (237 aa)). The chain crosses the membrane as a helical span at residues 173–193 (PAWFGGVMAIINNITMLAIVL). Residues 194–229 (TGSALIREREHGTVEHLLVMPITPFEIMMAKIWSMG) lie on the Cytoplasmic side of the membrane. Residues 230–250 (LVVLVVSGLSLVLMVKGVLGV) traverse the membrane as a helical segment. At 251–255 (PIEGS) the chain is on the periplasmic side. Residues 256–276 (IPLFMLGVALSLFATTSIGIF) form a helical membrane-spanning segment. Over 277–283 (MGTIARS) the chain is Cytoplasmic. A helical transmembrane segment spans residues 284–304 (MPQLGLLVILVLLPLQMLSGG). The Periplasmic portion of the chain corresponds to 305-342 (STPRESMPQMVQDIMLTMPTTHFVSLAQAILYRGAGFE). The chain crosses the membrane as a helical span at residues 343 to 363 (IVWPQFLTLMAIGGAFFTIAL). Residues 364-374 (LRFRKTIGTMA) are Cytoplasmic-facing.

Belongs to the ABC-2 integral membrane protein family.

The protein resides in the cell inner membrane. This chain is Inner membrane transport permease YhhJ (yhhJ), found in Escherichia coli (strain K12).